Here is a 62-residue protein sequence, read N- to C-terminus: Large ribosomal subunit protein bL28 (62 aa).

This sequence belongs to the bacterial ribosomal protein bL28 family.

The sequence is that of Large ribosomal subunit protein bL28 from Desulforamulus reducens (strain ATCC BAA-1160 / DSM 100696 / MI-1) (Desulfotomaculum reducens).